Here is a 169-residue protein sequence, read N- to C-terminus: MSQAIIAAKAKFVEEFAEELKSAKSIVVINYLGLTVDQVTAFRAELRESNAKMKVVKNTYLRRAAAQAGLDDLAPVFVGPSAVIYTDDEDNVTAPARIAADYAKKFDVVEIKGGALEGQVATKEQVEELAAIPGREGLLSMLLSVLQAPVRNFAYVVKAVAESKEESAE.

This sequence belongs to the universal ribosomal protein uL10 family. In terms of assembly, part of the ribosomal stalk of the 50S ribosomal subunit. The N-terminus interacts with L11 and the large rRNA to form the base of the stalk. The C-terminus forms an elongated spine to which L12 dimers bind in a sequential fashion forming a multimeric L10(L12)X complex.

In terms of biological role, forms part of the ribosomal stalk, playing a central role in the interaction of the ribosome with GTP-bound translation factors. This Lactobacillus delbrueckii subsp. bulgaricus (strain ATCC 11842 / DSM 20081 / BCRC 10696 / JCM 1002 / NBRC 13953 / NCIMB 11778 / NCTC 12712 / WDCM 00102 / Lb 14) protein is Large ribosomal subunit protein uL10.